Consider the following 101-residue polypeptide: MIPGELLAEPGELELNAGRPTITLVVANTGDRPIQVGSHYHFYETNAGLSFDREAARGFRLDIAAGTAVRFEPGQTRTVQLVALAGDRKVYGFRGLVQGAL.

This sequence belongs to the urease beta subunit family. In terms of assembly, heterotrimer of UreA (gamma), UreB (beta) and UreC (alpha) subunits. Three heterotrimers associate to form the active enzyme.

It is found in the cytoplasm. It catalyses the reaction urea + 2 H2O + H(+) = hydrogencarbonate + 2 NH4(+). The protein operates within nitrogen metabolism; urea degradation; CO(2) and NH(3) from urea (urease route): step 1/1. The polypeptide is Urease subunit beta (Dechloromonas aromatica (strain RCB)).